Consider the following 492-residue polypeptide: Gamma-aminobutyric acid receptor subunit alpha-3 (492 aa).

An N-terminal signal peptide occupies residues 1-28 (MIITQMSQFYMAGLGLLFLINILPGTTG). Topologically, residues 29-274 (QVESRRQEPG…MTTHFHLKRK (246 aa)) are extracellular. N-linked (GlcNAc...) asparagine glycosylation occurs at Asn-63. 4-aminobutanoate is bound at residue Arg-119. Residues Asn-163 and Asn-176 are each glycosylated (N-linked (GlcNAc...) asparagine). Thr-182 is a 4-aminobutanoate binding site. Cys-191 and Cys-205 are oxidised to a cystine. A glycan (N-linked (GlcNAc...) asparagine) is linked at Asn-228. Residues 275-295 (IGYFVIQTYLPCIMTVILSQV) form a helical membrane-spanning segment. Residues 296–305 (SFWLNRESVP) lie on the Cytoplasmic side of the membrane. Residues 306–325 (ARTVFGVTTVLTMTTLSISA) form a helical membrane-spanning segment. Residues 326–336 (RNSLPKVAYAT) are Extracellular-facing. Residues 337–357 (AMDWFMAVCYAFVFSALIEFA) traverse the membrane as a helical segment. Residues 358-457 (TVNYFTKRSW…TYNSVSKVDK (100 aa)) lie on the Cytoplasmic side of the membrane. Phosphoserine is present on Ser-426. Residue Thr-427 is modified to Phosphothreonine. The residue at position 433 (Ser-433) is a Phosphoserine. The chain crosses the membrane as a helical span at residues 458 to 478 (ISRIIFPVLFAIFNLVYWATY). The Extracellular portion of the chain corresponds to 479–492 (VNRESAIKGMIRKQ).

This sequence belongs to the ligand-gated ion channel (TC 1.A.9) family. Gamma-aminobutyric acid receptor (TC 1.A.9.5) subfamily. GABRA3 sub-subfamily. In terms of assembly, heteropentamer, formed by a combination of alpha (GABRA1-6), beta (GABRB1-3), gamma (GABRG1-3), delta (GABRD), epsilon (GABRE), rho (GABRR1-3), pi (GABRP) and theta (GABRQ) chains, each subunit exhibiting distinct physiological and pharmacological properties. Binds UBQLN1. Interacts with GPHN.

It localises to the postsynaptic cell membrane. The protein localises to the cell membrane. The enzyme catalyses chloride(in) = chloride(out). Alpha subunit of the heteropentameric ligand-gated chloride channel gated by gamma-aminobutyric acid (GABA), a major inhibitory neurotransmitter in the brain. GABA-gated chloride channels, also named GABA(A) receptors (GABAAR), consist of five subunits arranged around a central pore and contain GABA active binding site(s) located at the alpha and beta subunit interface(s). When activated by GABA, GABAARs selectively allow the flow of chloride anions across the cell membrane down their electrochemical gradient. Chloride influx into the postsynaptic neuron following GABAAR opening decreases the neuron ability to generate a new action potential, thereby reducing nerve transmission. The polypeptide is Gamma-aminobutyric acid receptor subunit alpha-3 (GABRA3) (Bos taurus (Bovine)).